Here is a 734-residue protein sequence, read N- to C-terminus: Photosystem I P700 chlorophyll a apoprotein A2 (734 aa).

8 helical membrane-spanning segments follow: residues 46–69 (IFASHFGQLAIIFLWTSGNLFHVA), 135–158 (LYTGALFLLFLSALSLIGGWLHLQ), 175–199 (LNHHLSGLFGVSSLAWTGHLVHVAI), 273–291 (MAHHHLAIAILFLIAGHMY), 330–353 (IHFQLGLALASLGVITSLVAQHMY), 369–395 (AALYTHHQYIAGFIMTGAFAHGAIFFI), 417–439 (AIISHLSWASLFLGFHTLGLYVH), and 517–535 (FLVHHAIALGLHTTTLILV). Residues Cys559 and Cys568 each contribute to the [4Fe-4S] cluster site. 2 helical membrane-spanning segments follow: residues 575–596 (AFYLAVFWMLNTIGWVTFYWHW) and 643–665 (LSVWAWMFLFGHLVWATGFMFLI). Residues His654, Met662, and Tyr670 each contribute to the chlorophyll a site. Trp671 contributes to the phylloquinone binding site. A helical transmembrane segment spans residues 707-727 (LVGLAHFSVGYIFTYAAFLIA).

The protein belongs to the PsaA/PsaB family. The PsaA/B heterodimer binds the P700 chlorophyll special pair and subsequent electron acceptors. PSI consists of a core antenna complex that captures photons, and an electron transfer chain that converts photonic excitation into a charge separation. The eukaryotic PSI reaction center is composed of at least 11 subunits. P700 is a chlorophyll a/chlorophyll a' dimer, A0 is one or more chlorophyll a, A1 is one or both phylloquinones and FX is a shared 4Fe-4S iron-sulfur center. serves as cofactor.

It is found in the plastid. The protein localises to the chloroplast thylakoid membrane. The catalysed reaction is reduced [plastocyanin] + hnu + oxidized [2Fe-2S]-[ferredoxin] = oxidized [plastocyanin] + reduced [2Fe-2S]-[ferredoxin]. Functionally, psaA and PsaB bind P700, the primary electron donor of photosystem I (PSI), as well as the electron acceptors A0, A1 and FX. PSI is a plastocyanin-ferredoxin oxidoreductase, converting photonic excitation into a charge separation, which transfers an electron from the donor P700 chlorophyll pair to the spectroscopically characterized acceptors A0, A1, FX, FA and FB in turn. Oxidized P700 is reduced on the lumenal side of the thylakoid membrane by plastocyanin. This Lobularia maritima (Sweet alyssum) protein is Photosystem I P700 chlorophyll a apoprotein A2.